The sequence spans 374 residues: Eukaryotic translation initiation factor 3 subunit M (374 aa).

Residue Ser-2 is modified to N-acetylserine. Phosphoserine occurs at positions 2 and 152. The region spanning Ala-180–His-339 is the PCI domain. N6-acetyllysine is present on Lys-254. Residues Lys-344–Thr-374 form an interaction with HSV-1 and HSV-2 region. Ser-367 carries the post-translational modification Phosphoserine.

As to quaternary structure, component of the eukaryotic translation initiation factor 3 (eIF-3) complex, which is composed of 13 subunits: EIF3A, EIF3B, EIF3C, EIF3D, EIF3E, EIF3F, EIF3G, EIF3H, EIF3I, EIF3J, EIF3K, EIF3L and EIF3M. The eIF-3 complex appears to include 3 stable modules: module A is composed of EIF3A, EIF3B, EIF3G and EIF3I; module B is composed of EIF3F, EIF3H, and EIF3M; and module C is composed of EIF3C, EIF3D, EIF3E, EIF3K and EIF3L. EIF3C of module C binds EIF3B of module A and EIF3H of module B, thereby linking the three modules. EIF3J is a labile subunit that binds to the eIF-3 complex via EIF3B. The eIF-3 complex interacts with RPS6KB1 under conditions of nutrient depletion. Mitogenic stimulation leads to binding and activation of a complex composed of MTOR and RPTOR, leading to phosphorylation and release of RPS6KB1 and binding of EIF4B to eIF-3. As to expression, broadly expressed.

It localises to the cytoplasm. Functionally, component of the eukaryotic translation initiation factor 3 (eIF-3) complex, which is required for several steps in the initiation of protein synthesis. The eIF-3 complex associates with the 40S ribosome and facilitates the recruitment of eIF-1, eIF-1A, eIF-2:GTP:methionyl-tRNAi and eIF-5 to form the 43S pre-initiation complex (43S PIC). The eIF-3 complex stimulates mRNA recruitment to the 43S PIC and scanning of the mRNA for AUG recognition. The eIF-3 complex is also required for disassembly and recycling of post-termination ribosomal complexes and subsequently prevents premature joining of the 40S and 60S ribosomal subunits prior to initiation. The eIF-3 complex specifically targets and initiates translation of a subset of mRNAs involved in cell proliferation, including cell cycling, differentiation and apoptosis, and uses different modes of RNA stem-loop binding to exert either translational activation or repression. In terms of biological role, (Microbial infection) May favor virus entry in case of infection with herpes simplex virus 1 (HSV1) or herpes simplex virus 2 (HSV2). This is Eukaryotic translation initiation factor 3 subunit M from Homo sapiens (Human).